Here is a 240-residue protein sequence, read N- to C-terminus: Bactofilin BacP (240 aa).

Positions 116-240 (DVEPGRLPAE…KKVVVKKKTR (125 aa)) are interacts with PadC. The interval 117-240 (VEPGRLPAER…KKVVVKKKTR (124 aa)) is disordered. The segment covering 126–150 (RPAVVRPTAVTRPTATPARPTIPAA) has biased composition (low complexity). Pro residues predominate over residues 151–173 (RPMPPPPPSRPTPPPPPARPSAP). The segment covering 229–240 (AKKKVVVKKKTR) has biased composition (basic residues).

The protein belongs to the bactofilin family. Interacts with BacN and probably also BacO, the 3 proteins colocalize as an extended structure. Interacts with PadC.

It is found in the cytoplasm. It localises to the cytoskeleton. A non-essential component of the chromosome segregation machinery. Positions the ParA-ParB-parS chromosome segregation machinery within the cell; BacP seems to be the most important bactofilin in this process. Forms a heteropolymeric, subpolar scaffold in the cell; BacP probably forms the core, BacO contributes to position and integrity while BacN does not seem to contribute to assembly. This Myxococcus xanthus (strain DK1622) protein is Bactofilin BacP.